The primary structure comprises 873 residues: Zinc fingers and homeoboxes protein 1 (873 aa).

The tract at residues 1–63 (MASRRKSTTP…ESVDSDNQQN (63 aa)) is disordered. Positions 18 to 30 (QDPDLELISDLDE) are enriched in acidic residues. A Phosphothreonine modification is found at T36. Phosphoserine occurs at positions 45, 47, and 48. 2 C2H2-type zinc fingers span residues 70–93 (YECK…DSEH) and 102–125 (YVCV…LKYH). Residue K159 forms a Glycyl lysine isopeptide (Lys-Gly) (interchain with G-Cter in SUMO2) linkage. Position 202 is a phosphoserine (S202). Residues 202 to 236 (SVEDVPEEKENEIKPDREEIVENPSSSASESNTST) are disordered. The span at 212–221 (NEIKPDREEI) shows a compositional bias: basic and acidic residues. Residues 223–236 (ENPSSSASESNTST) are compositionally biased toward low complexity. Positions 272 to 432 (NSNLIPKVLI…QNNVQKSQVP (161 aa)) are required for dimerization. Residues 272-564 (NSNLIPKVLI…AQPKQSWNPF (293 aa)) form a required for interaction with NFYA region. The segment at residues 284–346 (NSIPTYNAAL…LKHGVSWTPE (63 aa)) is a DNA-binding region (homeobox 1). Residues K441, K454, K485, and K629 each participate in a glycyl lysine isopeptide (Lys-Gly) (interchain with G-Cter in SUMO2) cross-link. 2 consecutive DNA-binding regions (homeobox) follow at residues 464-526 (SFGI…KSNQ) and 569-630 (PQKF…EEKM). 2 disordered regions span residues 626-667 (KEEK…ICKK) and 732-769 (SSMN…INNW). S648 bears the Phosphoserine mark. The homeobox 4 DNA-binding region spans 660–722 (STGKICKKTP…YAWKNGNLKW (63 aa)). The required for nuclear localization stretch occupies residues 734 to 768 (MNGLSSLRKRGRGRPKGRGRGRPRGRPRGSKRINN). Residues 740–764 (LRKRGRGRPKGRGRGRPRGRPRGSK) show a composition bias toward basic residues. At S774 the chain carries Phosphoserine. The homeobox 5 DNA-binding region spans 777–832 (KFKTGTAILKDYYLKHKFLNEQDLDELVNKSHMGYEQVREWFAERQRRSELGIELF). The segment at 829–873 (IELFEENEEEDEVIDDQEEDEEETDDSDTWEPPRHVKRKLSKSDD) is disordered. Acidic residues predominate over residues 831 to 857 (LFEENEEEDEVIDDQEEDEEETDDSDT). The tract at residues 831-873 (LFEENEEEDEVIDDQEEDEEETDDSDTWEPPRHVKRKLSKSDD) is required for repressor activity. Residues 863–873 (HVKRKLSKSDD) are compositionally biased toward basic residues.

Belongs to the ZHX family. In terms of assembly, forms homodimers. Also forms heterodimers with ZHX3 which is a prerequisite for repressor activity and with ZHX2. Interacts with NFYA. Interacts with ATF7IP.

The protein localises to the nucleus. Its function is as follows. Acts as a transcriptional repressor. This is Zinc fingers and homeoboxes protein 1 (ZHX1) from Gorilla gorilla gorilla (Western lowland gorilla).